Reading from the N-terminus, the 302-residue chain is Deoxyribonuclease-1-like 1 (302 aa).

Residues 1 to 18 form the signal peptide; the sequence is MHYPTALLFLILVNGAQA. Active-site residues include Glu97 and His148. Cys187 and Cys224 are disulfide-bonded. A glycan (N-linked (GlcNAc...) asparagine) is linked at Asn261.

It belongs to the DNase I family.

The protein localises to the endoplasmic reticulum. This chain is Deoxyribonuclease-1-like 1 (DNASE1L1), found in Chlorocebus aethiops (Green monkey).